We begin with the raw amino-acid sequence, 427 residues long: Serine--tRNA ligase (427 aa).

Position 231 to 233 (231 to 233 (TAE)) interacts with L-serine. 262-264 (RSE) contributes to the ATP binding site. Glu285 is an L-serine binding site. 349-352 (EISS) is an ATP binding site. Ser385 contributes to the L-serine binding site.

Belongs to the class-II aminoacyl-tRNA synthetase family. Type-1 seryl-tRNA synthetase subfamily. In terms of assembly, homodimer. The tRNA molecule binds across the dimer.

It localises to the cytoplasm. The catalysed reaction is tRNA(Ser) + L-serine + ATP = L-seryl-tRNA(Ser) + AMP + diphosphate + H(+). The enzyme catalyses tRNA(Sec) + L-serine + ATP = L-seryl-tRNA(Sec) + AMP + diphosphate + H(+). It participates in aminoacyl-tRNA biosynthesis; selenocysteinyl-tRNA(Sec) biosynthesis; L-seryl-tRNA(Sec) from L-serine and tRNA(Sec): step 1/1. Its function is as follows. Catalyzes the attachment of serine to tRNA(Ser). Is also able to aminoacylate tRNA(Sec) with serine, to form the misacylated tRNA L-seryl-tRNA(Sec), which will be further converted into selenocysteinyl-tRNA(Sec). The chain is Serine--tRNA ligase from Rhizobium etli (strain CIAT 652).